Here is a 509-residue protein sequence, read N- to C-terminus: DNA primase DnaG (509 aa).

In terms of domain architecture, Toprim spans 167–253; it reads DAIVVVEGRA…CVEDLARHEV (87 aa). Mg(2+) is bound by residues E173, D215, and D217. Residues 267-411 form a disordered region; the sequence is KQAASDDADP…ASTDEQPKTL (145 aa). Composition is skewed to low complexity over residues 313 to 331 and 383 to 402; these read PVSSPESPAESPAADETAA and ESTAAEAPESSADGPAAAGA.

This sequence belongs to the archaeal DnaG primase family. As to quaternary structure, forms a ternary complex with MCM helicase and DNA. It depends on Mg(2+) as a cofactor.

It catalyses the reaction ssDNA + n NTP = ssDNA/pppN(pN)n-1 hybrid + (n-1) diphosphate.. In terms of biological role, RNA polymerase that catalyzes the synthesis of short RNA molecules used as primers for DNA polymerase during DNA replication. In Natronomonas pharaonis (strain ATCC 35678 / DSM 2160 / CIP 103997 / JCM 8858 / NBRC 14720 / NCIMB 2260 / Gabara) (Halobacterium pharaonis), this protein is DNA primase DnaG.